A 262-amino-acid chain; its full sequence is Thiazole synthase (262 aa).

Catalysis depends on Lys97, which acts as the Schiff-base intermediate with DXP. Residues Gly158, 185–186, and 207–208 contribute to the 1-deoxy-D-xylulose 5-phosphate site; these read AG and NT. The segment at 243 to 262 is disordered; the sequence is DKAQASTPTVGQPFWHSAEY.

This sequence belongs to the ThiG family. Homotetramer. Forms heterodimers with either ThiH or ThiS.

The protein localises to the cytoplasm. The catalysed reaction is [ThiS sulfur-carrier protein]-C-terminal-Gly-aminoethanethioate + 2-iminoacetate + 1-deoxy-D-xylulose 5-phosphate = [ThiS sulfur-carrier protein]-C-terminal Gly-Gly + 2-[(2R,5Z)-2-carboxy-4-methylthiazol-5(2H)-ylidene]ethyl phosphate + 2 H2O + H(+). Its pathway is cofactor biosynthesis; thiamine diphosphate biosynthesis. Catalyzes the rearrangement of 1-deoxy-D-xylulose 5-phosphate (DXP) to produce the thiazole phosphate moiety of thiamine. Sulfur is provided by the thiocarboxylate moiety of the carrier protein ThiS. In vitro, sulfur can be provided by H(2)S. The polypeptide is Thiazole synthase (Neisseria meningitidis serogroup C (strain 053442)).